The chain runs to 560 residues: Vesicular glutamate transporter 1 (560 aa).

Residues 1–63 (MEFRQEEFRK…CTCFGLPRRY (63 aa)) are Cytoplasmic-facing. A helical transmembrane segment spans residues 64 to 84 (IIAIMSGLGFCISFGIRCNLG). Residues 85–116 (VAIVSMVNNSTTHRGGHVVMQKAQFNWDPETV) lie on the Extracellular side of the membrane. The helical transmembrane segment at 117–137 (GLIHGSFFWGYIVTQIPGGFI) threads the bilayer. Over 138 to 140 (CQK) the chain is Cytoplasmic. The helical transmembrane segment at 141–161 (FAANRVFGFAIVATSTLNMLI) threads the bilayer. Topologically, residues 162–169 (PSAARVHY) are extracellular. Residues 170 to 190 (GCVIFVRILQGLVEGVTYPAC) traverse the membrane as a helical segment. The Cytoplasmic portion of the chain corresponds to 191–208 (HGIWSKWAPPLERSRLAT). The helical transmembrane segment at 209-229 (TAFCGSYAGAVVAMPLAGVLV) threads the bilayer. Residues 230–236 (QYSGWSS) lie on the Extracellular side of the membrane. A helical membrane pass occupies residues 237 to 257 (VFYVYGSFGIFWYLFWLLVSY). The Cytoplasmic portion of the chain corresponds to 258-302 (ESPALHPSISEEERKYIEDAIGESAKLMNPVTKFNTPWRRFFTSM). A helical membrane pass occupies residues 303–323 (PVYAIIVANFCRSWTFYLLLI). Residues 324 to 341 (SQPAYFEEVFGFEISKVG) are Extracellular-facing. Residues 342–362 (LVSALPHLVMTIIVPIGGQIA) traverse the membrane as a helical segment. The Cytoplasmic portion of the chain corresponds to 363-378 (DFLRSRRIMSTTNVRK). A helical membrane pass occupies residues 379 to 399 (LMNCGGFGMEATLLLVVGYSH). At 400-401 (SK) the chain is on the extracellular side. The chain crosses the membrane as a helical span at residues 402–422 (GVAISFLVLAVGFSGFAISGF). The Cytoplasmic segment spans residues 423-435 (NVNHLDIAPRYAS). Residues 436-456 (ILMGISNGVGTLSGMVCPIIV) form a helical membrane-spanning segment. Residues 457 to 469 (GAMTKHKTREEWQ) lie on the Extracellular side of the membrane. A helical membrane pass occupies residues 470-490 (YVFLIASLVHYGGVIFYGVFA). Residues 491–560 (SGEKQPWAEP…PRPPPPVRDY (70 aa)) are Cytoplasmic-facing. Positions 497 to 560 (WAEPEEMSEE…PRPPPPVRDY (64 aa)) are disordered. Serine 504 carries the phosphoserine modification. Over residues 520–529 (DESEMEDEAE) the composition is skewed to acidic residues. 2 stretches are compositionally biased toward pro residues: residues 531–540 (PGAPPAPPPS) and 550–560 (PPRPPPPVRDY).

It belongs to the major facilitator superfamily. Sodium/anion cotransporter family. VGLUT subfamily. Interacts with SHANK3.

It is found in the cytoplasmic vesicle. The protein localises to the secretory vesicle. It localises to the synaptic vesicle membrane. The protein resides in the cell membrane. Its subcellular location is the synapse. It is found in the synaptosome. The catalysed reaction is L-glutamate(out) = L-glutamate(in). The enzyme catalyses chloride(in) = chloride(out). It carries out the reaction 3 Na(+)(out) + phosphate(out) = 3 Na(+)(in) + phosphate(in). It catalyses the reaction phosphate(in) = phosphate(out). The catalysed reaction is K(+)(in) + H(+)(out) = K(+)(out) + H(+)(in). With respect to regulation, chloride channel activity is allosterically activated by lumenal H(+) and Cl(-) leading to synaptic vesicles acidification. The L-glutamate transport activity is allosterically activated by lumenal H(+) and Cl(-). The allosteric activation by H(+) efficiently prevents non-vesicular efflux across the plasma membrane, thereby restricting L-glutamate transport activity to acidic membranes such as synaptic vesicles. In terms of biological role, multifunctional transporter that transports L-glutamate as well as multiple ions such as chloride, proton, potassium, sodium and phosphate. At the synaptic vesicle membrane, mainly functions as an uniporter which transports preferentially L-glutamate but also phosphate from the cytoplasm into synaptic vesicles at presynaptic nerve terminals of excitatory neural cells. The L-glutamate or phosphate uniporter activity is electrogenic and is driven by the proton electrochemical gradient, mainly by the electrical gradient established by the vacuolar H(+)-ATPase across the synaptic vesicle membrane. In addition, functions as a chloride channel that allows a chloride permeation through the synaptic vesicle membrane that affects the proton electrochemical gradient and promotes synaptic vesicles acidification. Moreover, may function as a K(+)/H(+) antiport allowing to maintain the electrical gradient and to decrease chemical gradient and therefore sustain vesicular glutamate uptake. The vesicular K(+)/H(+) antiport activity is electroneutral. At the plasma membrane, following exocytosis, functions as a symporter of Na(+) and phosphate from the extracellular space to the cytoplasm allowing synaptic phosphate homeostasis regulation. The symporter activity is driven by an inside negative membrane potential and is electrogenic. Is necessary for synaptic signaling of visual-evoked responses from photoreceptors. The polypeptide is Vesicular glutamate transporter 1 (Bos taurus (Bovine)).